The following is a 303-amino-acid chain: DCN1-like protein 3 (303 aa).

The interval 1 to 40 (MGQCVTKCKNPSSTLGSKNGERESSKPHKRSSSHKEEHMS) is disordered. A lipid anchor (N-myristoyl glycine) is attached at Gly-2. The DCUN1 domain occupies 85 to 277 (SSLQRIEELF…LFDTFVEWEM (193 aa)).

As to quaternary structure, may interact (via the DCUN1 domain) with unneddylated cullins.

The protein localises to the cell membrane. It localises to the cytoplasm. It is found in the nucleus. The protein resides in the perinuclear region. In terms of biological role, contributes to the neddylation of all cullins by transferring NEDD8 from N-terminally acetylated NEDD8-conjugating E2s enzyme to different cullin C-terminal domain-RBX complexes. At the cell membrane, can promote and as well inhibit cullins neddylation. The sequence is that of DCN1-like protein 3 from Xenopus laevis (African clawed frog).